A 509-amino-acid polypeptide reads, in one-letter code: ATP synthase subunit alpha (509 aa).

Glycine 169 to threonine 176 is a binding site for ATP.

The protein belongs to the ATPase alpha/beta chains family. In terms of assembly, F-type ATPases have 2 components, CF(1) - the catalytic core - and CF(0) - the membrane proton channel. CF(1) has five subunits: alpha(3), beta(3), gamma(1), delta(1), epsilon(1). CF(0) has three main subunits: a(1), b(2) and c(9-12). The alpha and beta chains form an alternating ring which encloses part of the gamma chain. CF(1) is attached to CF(0) by a central stalk formed by the gamma and epsilon chains, while a peripheral stalk is formed by the delta and b chains.

It is found in the cell inner membrane. The catalysed reaction is ATP + H2O + 4 H(+)(in) = ADP + phosphate + 5 H(+)(out). Functionally, produces ATP from ADP in the presence of a proton gradient across the membrane. The alpha chain is a regulatory subunit. The sequence is that of ATP synthase subunit alpha from Parvibaculum lavamentivorans (strain DS-1 / DSM 13023 / NCIMB 13966).